The chain runs to 813 residues: Envelope glycoprotein H (813 aa).

Positions 1 to 18 (MGLPGSIVFLIMIHAFCA) are cleaved as a signal peptide. The Virion surface segment spans residues 19–769 (KKTPTNTLPS…ESERVTIISA (751 aa)). N-linked (GlcNAc...) asparagine; by host glycosylation is found at Asn-62 and Asn-116. Positions 135-159 (DRSGLKLDDKDDAQPTGTNPPTELK) are disordered. The span at 137–147 (SGLKLDDKDDA) shows a compositional bias: basic and acidic residues. Residues 212–273 (DGAEVIMKIG…FTRRPYLIYL (62 aa)) are interaction with gL. N-linked (GlcNAc...) asparagine; by host glycans are attached at residues Asn-247, Asn-279, Asn-410, Asn-434, Asn-469, Asn-576, Asn-727, and Asn-750. A helical transmembrane segment spans residues 770–790 (TYVATATAGASIAISIAIITV). Residues 791–813 (RMIINNFRYNYHRYKKLSLYDDL) are Intravirion-facing.

This sequence belongs to the herpesviridae glycoprotein H family. In terms of assembly, interacts with glycoprotein L (gL); this interaction is necessary for the correct processing and cell surface expression of gH. The heterodimer gH/gL seems to interact with gB trimers during fusion. N-glycosylated, O-glycosylated, and sialylated.

The protein resides in the virion membrane. The protein localises to the host cell membrane. It is found in the host endosome membrane. The heterodimer glycoprotein H-glycoprotein L is required for the fusion of viral and plasma membranes leading to virus entry into the host cell. Following initial binding to host receptor, membrane fusion is mediated by the fusion machinery composed of gB and the heterodimer gH/gL. May also be involved in the fusion between the virion envelope and the outer nuclear membrane during virion morphogenesis. This Gallus gallus (Chicken) protein is Envelope glycoprotein H.